The following is a 222-amino-acid chain: 3-dehydroquinate dehydratase (222 aa).

Residues 29–31 (ELR) and arginine 55 each bind 3-dehydroquinate. Catalysis depends on histidine 112, which acts as the Proton donor/acceptor. The Schiff-base intermediate with substrate role is filled by lysine 139. Arginine 178, serine 199, and glutamine 203 together coordinate 3-dehydroquinate.

It belongs to the type-I 3-dehydroquinase family. In terms of assembly, homodimer.

It carries out the reaction 3-dehydroquinate = 3-dehydroshikimate + H2O. The protein operates within metabolic intermediate biosynthesis; chorismate biosynthesis; chorismate from D-erythrose 4-phosphate and phosphoenolpyruvate: step 3/7. Involved in the third step of the chorismate pathway, which leads to the biosynthesis of aromatic amino acids. Catalyzes the cis-dehydration of 3-dehydroquinate (DHQ) and introduces the first double bond of the aromatic ring to yield 3-dehydroshikimate. The chain is 3-dehydroquinate dehydratase from Dehalococcoides mccartyi (strain ATCC BAA-2266 / KCTC 15142 / 195) (Dehalococcoides ethenogenes (strain 195)).